A 353-amino-acid polypeptide reads, in one-letter code: H(2)-forming methylenetetrahydromethanopterin dehydrogenase-related protein MJ1338 (353 aa).

The protein belongs to the HMD family.

The polypeptide is H(2)-forming methylenetetrahydromethanopterin dehydrogenase-related protein MJ1338 (Methanocaldococcus jannaschii (strain ATCC 43067 / DSM 2661 / JAL-1 / JCM 10045 / NBRC 100440) (Methanococcus jannaschii)).